Consider the following 484-residue polypeptide: MIASQFLSALPLVLLLLRESGAWSYSASTETMTFDDASAYCQQRYTHLVAIQNHAEIEYLNSTFNYSASYYWIGIRKINGTWTWIGTKKALTPEATNWAPGEPNNKQSNEDCVEIYIKRDKDSGKWNDERCSKKKLALCYTAACTPTSCSGHGECIETINSSTCQCYPGFRGLQCEQVVECDALENPVNGVVTCPQSLPWNTTCAFECKEGFELIGPEHLQCTSSGSWDGKKPTCKAVTCDTVGHPQNGDVSCNHSSIGEFAYKSTCHFTCAEGFGLQGPAQIECTAQGQWTQQAPVCKAVKCPAVSQPKNGLVKFTHSPTGEFTYKSSCAFSCEEGFELRGSAQLACTSQGQWTQEVPSCQVVQCSSLEVPREINMSCSGEPVFGAVCTFACPEGWMLNGSVALTCGATGHWSGMLPTCEAPAESKIPLAMGLAAGGVSFMTSASFLLWLLKRLRKRAKKFVPSSSSECLQPNGSYQMPSDLI.

The N-terminal stretch at 1–22 (MIASQFLSALPLVLLLLRESGA) is a signal peptide. Positions 23 to 140 (WSYSASTETM…CSKKKLALCY (118 aa)) constitute a C-type lectin domain. The Extracellular segment spans residues 23–429 (WSYSASTETM…CEAPAESKIP (407 aa)). 14 disulfide bridges follow: C41–C139, C112–C131, C144–C155, C149–C164, C166–C175, C181–C222, C194–C204, C208–C235, C240–C285, C271–C298, C303–C348, C334–C361, C366–C407, and C393–C420. Residues N61, N65, and N79 are each glycosylated (N-linked (GlcNAc...) asparagine). Ca(2+) is bound by residues E102, N104, and E110. Residues 102 to 110 (EPNNKQSNE), 114 to 119 (EIYIKR), and 127 to 129 (NDE) contribute to the a carbohydrate site. Ca(2+) is bound by residues N127 and D128. In terms of domain architecture, EGF-like spans 141-176 (TAACTPTSCSGHGECIETINSSTCQCYPGFRGLQCE). The N-linked (GlcNAc...) asparagine glycan is linked to N160. Sushi domains follow at residues 179-237 (VECD…TCKA), 251-300 (VSCN…VCKA), 301-363 (VKCP…SCQV), and 364-422 (VQCS…TCEA). Residue N201 is glycosylated (N-linked (GlcNAc...) asparagine). Residue N254 is glycosylated (N-linked (GlcNAc...) asparagine). Residues N376 and N400 are each glycosylated (N-linked (GlcNAc...) asparagine). A helical transmembrane segment spans residues 430-451 (LAMGLAAGGVSFMTSASFLLWL). The Cytoplasmic segment spans residues 452-484 (LKRLRKRAKKFVPSSSSECLQPNGSYQMPSDLI).

Belongs to the selectin/LECAM family. Interacts with SELPLG/PSGL1 and PODXL2 through the sialyl Lewis X epitope. SELPLG sulfation appears not to be required for this interaction.

The protein localises to the cell membrane. In terms of biological role, cell-surface glycoprotein having a role in immunoadhesion. Mediates in the adhesion of blood neutrophils in cytokine-activated endothelium through interaction with SELPLG/PSGL1. May have a role in capillary morphogenesis. This Sus scrofa (Pig) protein is E-selectin (SELE).